The sequence spans 340 residues: Ketol-acid reductoisomerase (NADP(+)) (340 aa).

Residues A2 to T182 form the KARI N-terminal Rossmann domain. NADP(+) is bound by residues F25 to Q28, S51, S53, and D83 to Q86. H108 is an active-site residue. Residue G134 participates in NADP(+) binding. Residues T183–V328 enclose the KARI C-terminal knotted domain. 4 residues coordinate Mg(2+): D191, E195, E227, and E231. Residue S252 coordinates substrate.

This sequence belongs to the ketol-acid reductoisomerase family. Mg(2+) is required as a cofactor.

It catalyses the reaction (2R)-2,3-dihydroxy-3-methylbutanoate + NADP(+) = (2S)-2-acetolactate + NADPH + H(+). The enzyme catalyses (2R,3R)-2,3-dihydroxy-3-methylpentanoate + NADP(+) = (S)-2-ethyl-2-hydroxy-3-oxobutanoate + NADPH + H(+). It functions in the pathway amino-acid biosynthesis; L-isoleucine biosynthesis; L-isoleucine from 2-oxobutanoate: step 2/4. The protein operates within amino-acid biosynthesis; L-valine biosynthesis; L-valine from pyruvate: step 2/4. Functionally, involved in the biosynthesis of branched-chain amino acids (BCAA). Catalyzes an alkyl-migration followed by a ketol-acid reduction of (S)-2-acetolactate (S2AL) to yield (R)-2,3-dihydroxy-isovalerate. In the isomerase reaction, S2AL is rearranged via a Mg-dependent methyl migration to produce 3-hydroxy-3-methyl-2-ketobutyrate (HMKB). In the reductase reaction, this 2-ketoacid undergoes a metal-dependent reduction by NADPH to yield (R)-2,3-dihydroxy-isovalerate. The sequence is that of Ketol-acid reductoisomerase (NADP(+)) from Chloroflexus aggregans (strain MD-66 / DSM 9485).